We begin with the raw amino-acid sequence, 292 residues long: Small ribosomal subunit protein uS2 (292 aa).

The disordered stretch occupies residues Thr-265 to Trp-292. Residues Ala-277–Trp-292 are compositionally biased toward low complexity.

The protein belongs to the universal ribosomal protein uS2 family. In terms of assembly, component of the small ribosomal subunit. Mature ribosomes consist of a small (40S) and a large (60S) subunit. The 40S subunit contains about 33 different proteins and 1 molecule of RNA (18S). The 60S subunit contains about 49 different proteins and 3 molecules of RNA (25S, 5.8S and 5S). Interacts with RPS21.

The protein resides in the cytoplasm. In terms of biological role, required for the assembly and/or stability of the 40S ribosomal subunit. Required for the processing of the 20S rRNA-precursor to mature 18S rRNA in a late step of the maturation of 40S ribosomal subunits. This chain is Small ribosomal subunit protein uS2, found in Cryptococcus neoformans var. neoformans serotype D (strain B-3501A) (Filobasidiella neoformans).